The following is a 54-amino-acid chain: Sec-independent protein translocase protein TatA (54 aa).

The chain crosses the membrane as a helical span at residues 1 to 21 (MGMSFSHLLIVLLIIFVLFGA).

This sequence belongs to the TatA/E family. In terms of assembly, the Tat system comprises two distinct complexes: a TatABC complex, containing multiple copies of TatA, TatB and TatC subunits, and a separate TatA complex, containing only TatA subunits. Substrates initially bind to the TatABC complex, which probably triggers association of the separate TatA complex to form the active translocon.

The protein localises to the cell inner membrane. Its function is as follows. Part of the twin-arginine translocation (Tat) system that transports large folded proteins containing a characteristic twin-arginine motif in their signal peptide across membranes. TatA could form the protein-conducting channel of the Tat system. The chain is Sec-independent protein translocase protein TatA from Rickettsia prowazekii (strain Madrid E).